We begin with the raw amino-acid sequence, 425 residues long: Septin-7 (425 aa).

Residues 28–297 (RGFEFTLMVV…ENYRSRKLAA (270 aa)) form the Septin-type G domain. The G1 motif stretch occupies residues 38 to 45 (GESGLGKS). Residues 38–45 (GESGLGKS), Thr-71, Gly-97, 176–184 (KADTLTPEE), Gly-231, and Arg-246 contribute to the GTP site. The segment at 94–97 (DTPG) is G3 motif. Positions 175 to 178 (AKAD) are G4 motif. Positions 324 to 421 (LAQMEEERRE…SRTLEKNKKK (98 aa)) form a coiled coil.

Belongs to the TRAFAC class TrmE-Era-EngA-EngB-Septin-like GTPase superfamily. Septin GTPase family. As to quaternary structure, monomer, and homodimer. Nucleotide binding promotes oligomerization. Can form heterooligomers with other family members and form filaments.

Its subcellular location is the cytoplasm. The protein resides in the chromosome. It localises to the centromere. It is found in the kinetochore. The protein localises to the cytoskeleton. Its subcellular location is the spindle. The protein resides in the cleavage furrow. It localises to the midbody. It is found in the cilium axoneme. Its function is as follows. Filament-forming cytoskeletal GTPase. Required for normal organization of the actin cytoskeleton. Required for normal progress through mitosis. Involved in cytokinesis. Plays a role in ciliogenesis and collective cell movements including convergent extension during gastrulation. Controls cell elongation but not polarization during convergent extension. The chain is Septin-7 from Xenopus laevis (African clawed frog).